The primary structure comprises 301 residues: Protein phosphatase 1 regulatory subunit 3B (301 aa).

The PP1-binding motif motif lies at Arg79–Phe82. The CBM21 domain occupies Arg142–Val250.

As to quaternary structure, interacts with glycogen, PPP1CC catalytic subunit of PP1 and PYGL. Associates with glycogen particles. Forms complexes with debranching enzyme, glycogen phosphorylase, glycogen synthase and phosphorylase kinase which is necessary for its regulation of PP1 activity.

In terms of biological role, acts as a glycogen-targeting subunit for phosphatase PP1. Facilitates interaction of the PP1 with enzymes of the glycogen metabolism and regulates its activity. Suppresses the rate at which PP1 dephosphorylates (inactivates) glycogen phosphorylase and enhances the rate at which it activates glycogen synthase and therefore limits glycogen breakdown. The chain is Protein phosphatase 1 regulatory subunit 3B (ppp1r3b) from Xenopus tropicalis (Western clawed frog).